The primary structure comprises 427 residues: 3-phosphoshikimate 1-carboxyvinyltransferase (427 aa).

3-phosphoshikimate-binding residues include Lys20, Ser21, and Arg25. Lys20 contributes to the phosphoenolpyruvate binding site. Residues Gly92 and Arg120 each coordinate phosphoenolpyruvate. Residues Ser166, Gln168, Asp312, and Lys339 each contribute to the 3-phosphoshikimate site. Gln168 provides a ligand contact to phosphoenolpyruvate. The active-site Proton acceptor is the Asp312. Residues Arg343 and Arg385 each coordinate phosphoenolpyruvate.

It belongs to the EPSP synthase family. As to quaternary structure, monomer.

Its subcellular location is the cytoplasm. The catalysed reaction is 3-phosphoshikimate + phosphoenolpyruvate = 5-O-(1-carboxyvinyl)-3-phosphoshikimate + phosphate. The protein operates within metabolic intermediate biosynthesis; chorismate biosynthesis; chorismate from D-erythrose 4-phosphate and phosphoenolpyruvate: step 6/7. Its function is as follows. Catalyzes the transfer of the enolpyruvyl moiety of phosphoenolpyruvate (PEP) to the 5-hydroxyl of shikimate-3-phosphate (S3P) to produce enolpyruvyl shikimate-3-phosphate and inorganic phosphate. The polypeptide is 3-phosphoshikimate 1-carboxyvinyltransferase (Streptococcus thermophilus (strain CNRZ 1066)).